The sequence spans 703 residues: MPRKTPIERYRNIGISAHIDAGKTTTTERILFYTGVSHKIGEVHDGAATMDWMEQGQERGITITSAATTAFWKGMAGNYPEHRINIIDTPGHVDFTIEVERSMRVLDGACMVYDSVGGVQPQSETVWRQANKYKVPRIAFVNKMDRIGADFFRVQKQIGERLKGVAVPIQIPIGAEDHFQGVVDLVKMKAIVWDDESQGVKFTYEDIPANLVELAHEWREKMVEAAAEASEELLEKYLHDHESLTEDEIKAALRQRTIANEIVPMLCGSAFKNKGVQAMLDAVIDYLPSPVDVPAILGHDFADPEKPAERHPSDDEPFSSLAFKIMTDPFVGQLIFFRVYSGVVESGDTVLNATKDKKERLGRILQMHANERKEIKEVRAGDIAAAVGLKEATTGDTLCDPQKPIILEKMEFPEPVISQAVEPKTKADQEKMGLALNRLAQEDPSFRVQTDEESGQTIISGMGELHLEILVDRMKREFGVEATVGKPQVAYRETVRTTAADVEGKFVKQSGGRGQYGHAVITLEPNPGKGYEFLDEIKGGVIPREFIPAVDKGITETLKSGVLAGYPVVDVKVHLTFGSYHDVDSNENAFRMAGSMAFKEAMRKAKPVLLEPMMAVEVETPEDFMGNVMGDLSSRRGIVQGMEDIAGGGGKLVRAEVPLAEMFGYSTSLRSATQGRATYTMEFKHYAETPANVSEAVINAKVK.

Positions 8–291 constitute a tr-type G domain; the sequence is ERYRNIGISA…AVIDYLPSPV (284 aa). Residues 17–24, 88–92, and 142–145 contribute to the GTP site; these read AHIDAGKT, DTPGH, and NKMD.

It belongs to the TRAFAC class translation factor GTPase superfamily. Classic translation factor GTPase family. EF-G/EF-2 subfamily.

It is found in the cytoplasm. Its function is as follows. Catalyzes the GTP-dependent ribosomal translocation step during translation elongation. During this step, the ribosome changes from the pre-translocational (PRE) to the post-translocational (POST) state as the newly formed A-site-bound peptidyl-tRNA and P-site-bound deacylated tRNA move to the P and E sites, respectively. Catalyzes the coordinated movement of the two tRNA molecules, the mRNA and conformational changes in the ribosome. This Burkholderia orbicola (strain AU 1054) protein is Elongation factor G 1.